A 66-amino-acid chain; its full sequence is Clarkitoxin-1 (66 aa).

Cystine bridges form between Cys3–Cys24, Cys17–Cys42, Cys46–Cys59, and Cys60–Cys65.

In terms of tissue distribution, expressed by the venom gland.

The protein resides in the secreted. Not toxic to mice when injected intravenously or intraperitoneally. The protein is Clarkitoxin-1 of Micrurus clarki (Clark's coral snake).